The primary structure comprises 165 residues: Chorismate pyruvate-lyase (165 aa).

Residues methionine 35, arginine 77, leucine 115, and glutamate 156 each contribute to the substrate site.

It belongs to the UbiC family. In terms of assembly, monomer.

Its subcellular location is the cytoplasm. The enzyme catalyses chorismate = 4-hydroxybenzoate + pyruvate. Its pathway is cofactor biosynthesis; ubiquinone biosynthesis. Removes the pyruvyl group from chorismate, with concomitant aromatization of the ring, to provide 4-hydroxybenzoate (4HB) for the ubiquinone pathway. The sequence is that of Chorismate pyruvate-lyase from Citrobacter koseri (strain ATCC BAA-895 / CDC 4225-83 / SGSC4696).